The chain runs to 103 residues: Small ribosomal subunit protein eS25 (103 aa).

The disordered stretch occupies residues 1-23 (MGGEDMAKKKAPSAKEGEKQQGF).

This sequence belongs to the eukaryotic ribosomal protein eS25 family.

The polypeptide is Small ribosomal subunit protein eS25 (rps25e) (Aeropyrum pernix (strain ATCC 700893 / DSM 11879 / JCM 9820 / NBRC 100138 / K1)).